We begin with the raw amino-acid sequence, 271 residues long: Putative phosphoenolpyruvate synthase regulatory protein (271 aa).

An ADP-binding site is contributed by 151-158; sequence GVSRSGKT.

It belongs to the pyruvate, phosphate/water dikinase regulatory protein family. PSRP subfamily.

The catalysed reaction is [pyruvate, water dikinase] + ADP = [pyruvate, water dikinase]-phosphate + AMP + H(+). It carries out the reaction [pyruvate, water dikinase]-phosphate + phosphate + H(+) = [pyruvate, water dikinase] + diphosphate. Its function is as follows. Bifunctional serine/threonine kinase and phosphorylase involved in the regulation of the phosphoenolpyruvate synthase (PEPS) by catalyzing its phosphorylation/dephosphorylation. This chain is Putative phosphoenolpyruvate synthase regulatory protein, found in Paraburkholderia xenovorans (strain LB400).